We begin with the raw amino-acid sequence, 949 residues long: ATPase 6, plasma membrane-type (949 aa).

Over 1 to 64 (MAADISWDEI…EKVENKFLKF (64 aa)) the chain is Cytoplasmic. A helical membrane pass occupies residues 65–84 (LGFMWNPLSWVMEAAAIMAI). Residues 85–96 (VLANGGGRPPDW) are Extracellular-facing. A helical membrane pass occupies residues 97–117 (QDFVGITCLLIINSTISFIEE). Over 118–246 (NNAGNAAAAL…GHFQKVLTAI (129 aa)) the chain is Cytoplasmic. A helical transmembrane segment spans residues 247-267 (GNFCICSIGIGMLIEIIIMYP). Residues 268–276 (IQHRKYRDG) lie on the Extracellular side of the membrane. Residues 277–294 (IDNLLVLLIGGIPIAMPT) traverse the membrane as a helical segment. The Cytoplasmic segment spans residues 295–645 (VLSVTMAIGS…TSRAIFQRMK (351 aa)). Catalysis depends on D332, which acts as the 4-aspartylphosphate intermediate. D590 and D594 together coordinate Mg(2+). The chain crosses the membrane as a helical span at residues 646 to 667 (NYTIYAVSITIRIVLGFMLVAL). Residues 668-672 (IWEFD) are Extracellular-facing. The chain crosses the membrane as a helical span at residues 673 to 695 (FSPFMVLIIAILNDGTIMTISKD). The Cytoplasmic segment spans residues 696 to 711 (RVKPSPIPDSWKLKEI). Residues 712–732 (FATGVVLGTYMALVTVVFFWL) traverse the membrane as a helical segment. At 733-753 (AHDTTFFSDKFGVRSLQGKDE) the chain is on the extracellular side. A helical transmembrane segment spans residues 754–774 (ELIAVLYLQVSIISQALIFVT). Topologically, residues 775 to 786 (RSRSWSFVERPG) are cytoplasmic. The helical transmembrane segment at 787–807 (LLLLIAFFVAQLIATLIATYA) threads the bilayer. The Extracellular segment spans residues 808–815 (HWEFARIK). A helical transmembrane segment spans residues 816–836 (GCGWGWCGVIWIYSIVTYIPL). Over 837 to 949 (DILKFITRYT…IDNLNQHYTV (113 aa)) the chain is Cytoplasmic. A Phosphothreonine modification is found at T883. At S931 the chain carries Phosphoserine. The tract at residues 947–949 (YTV) is interaction with 14-3-3 proteins. The residue at position 948 (T948) is a Phosphothreonine.

The protein belongs to the cation transport ATPase (P-type) (TC 3.A.3) family. Type IIIA subfamily. Binds to 14-3-3 proteins. The binding is induced by phosphorylation of Thr-948. Binding to 14-3-3 proteins activates the H(+)-ATPase. In terms of tissue distribution, expressed in guard cells.

The protein resides in the membrane. It carries out the reaction ATP + H2O + H(+)(in) = ADP + phosphate + 2 H(+)(out). In terms of biological role, the plasma membrane H(+) ATPase of plants and fungi generates a proton gradient that drives the active transport of nutrients by H(+)-symport. The resulting external acidification and/or internal alkinization may mediate growth responses. The polypeptide is ATPase 6, plasma membrane-type (AHA6) (Arabidopsis thaliana (Mouse-ear cress)).